The following is a 130-amino-acid chain: Protein YchQ (130 aa).

Residues 1–9 (MTSFSTLLS) lie on the Periplasmic side of the membrane. Residues 10–28 (VHLISIALSVGLLTLRFWL) form a helical membrane-spanning segment. Topologically, residues 29-39 (RYQKHPQAFAR) are cytoplasmic. A helical membrane pass occupies residues 40-59 (WTRIVPPVVDTLLLLSGIAL). At 60–73 (MAKAHILPFSGQAQ) the chain is on the periplasmic side. A helical transmembrane segment spans residues 74–93 (WLTEKLFGVIIYIVLGFIAL). At 94–104 (DYRRMHSQQAR) the chain is on the cytoplasmic side. A helical membrane pass occupies residues 105–124 (IIAFPLALVVLYIIIKLATT). The Periplasmic portion of the chain corresponds to 125–130 (KVPLLG).

This sequence belongs to the SirB2 family.

The protein localises to the cell inner membrane. The protein is Protein YchQ (ychQ) of Escherichia coli (strain K12).